Consider the following 58-residue polypeptide: Small ribosomal subunit protein bS21 (58 aa).

Belongs to the bacterial ribosomal protein bS21 family.

This Streptococcus pyogenes serotype M49 (strain NZ131) protein is Small ribosomal subunit protein bS21.